The following is a 181-amino-acid chain: UPF0397 protein SUB0313 (181 aa).

A run of 5 helical transmembrane segments spans residues 11-31 (AIGI…ITIF), 45-65 (LFSV…GHML), 69-89 (FAGY…GLGI), 114-134 (VQAL…DILI), and 147-167 (LFAA…LLIA).

The protein belongs to the UPF0397 family.

The protein resides in the cell membrane. In Streptococcus uberis (strain ATCC BAA-854 / 0140J), this protein is UPF0397 protein SUB0313.